We begin with the raw amino-acid sequence, 426 residues long: Gamma-glutamyl phosphate reductase (426 aa).

Belongs to the gamma-glutamyl phosphate reductase family.

The protein localises to the cytoplasm. The enzyme catalyses L-glutamate 5-semialdehyde + phosphate + NADP(+) = L-glutamyl 5-phosphate + NADPH + H(+). It participates in amino-acid biosynthesis; L-proline biosynthesis; L-glutamate 5-semialdehyde from L-glutamate: step 2/2. Catalyzes the NADPH-dependent reduction of L-glutamate 5-phosphate into L-glutamate 5-semialdehyde and phosphate. The product spontaneously undergoes cyclization to form 1-pyrroline-5-carboxylate. In Sorangium cellulosum (strain So ce56) (Polyangium cellulosum (strain So ce56)), this protein is Gamma-glutamyl phosphate reductase.